The following is a 395-amino-acid chain: Lipoyl synthase, mitochondrial (395 aa).

The N-terminal 24 residues, 1 to 24 (MVKLPSASRIRSLATVPSTATRAF), are a transit peptide targeting the mitochondrion. Cysteine 107, cysteine 112, cysteine 118, cysteine 137, cysteine 141, cysteine 144, and serine 357 together coordinate [4Fe-4S] cluster. The 225-residue stretch at 122 to 346 (GKGNATATIM…KNVAEGMGFL (225 aa)) folds into the Radical SAM core domain.

This sequence belongs to the radical SAM superfamily. Lipoyl synthase family. Requires [4Fe-4S] cluster as cofactor.

Its subcellular location is the mitochondrion. The catalysed reaction is [[Fe-S] cluster scaffold protein carrying a second [4Fe-4S](2+) cluster] + N(6)-octanoyl-L-lysyl-[protein] + 2 oxidized [2Fe-2S]-[ferredoxin] + 2 S-adenosyl-L-methionine + 4 H(+) = [[Fe-S] cluster scaffold protein] + N(6)-[(R)-dihydrolipoyl]-L-lysyl-[protein] + 4 Fe(3+) + 2 hydrogen sulfide + 2 5'-deoxyadenosine + 2 L-methionine + 2 reduced [2Fe-2S]-[ferredoxin]. It participates in protein modification; protein lipoylation via endogenous pathway; protein N(6)-(lipoyl)lysine from octanoyl-[acyl-carrier-protein]: step 2/2. Catalyzes the radical-mediated insertion of two sulfur atoms into the C-6 and C-8 positions of the octanoyl moiety bound to the lipoyl domains of lipoate-dependent enzymes, thereby converting the octanoylated domains into lipoylated derivatives. The protein is Lipoyl synthase, mitochondrial of Cryptococcus neoformans var. neoformans serotype D (strain B-3501A) (Filobasidiella neoformans).